An 844-amino-acid polypeptide reads, in one-letter code: Rho guanine nucleotide exchange factor 33 (844 aa).

Basic and acidic residues-rich tracts occupy residues 1–13 (MEKTKTKQGENEH) and 101–113 (QQKIEQLQQEKRR). Disordered regions lie at residues 1–20 (MEKTKTKQGENEHMPVNNPS), 101–142 (QQKI…GSPF), and 169–189 (AQESRSVHVGDSNVKGMMGPG). Residues 54–129 (LEEKVKSCRC…AKKTQKEEHS (76 aa)) are a coiled coil. Over residues 130–142 (SQAGPAQAQGSPF) the composition is skewed to polar residues. One can recognise a DH domain in the interval 265–440 (KRQTVALELL…RVFISHYTLL (176 aa)). Disordered stretches follow at residues 498-541 (LQPY…DWEL), 668-687 (RPEHPLQPLPKSATSPAGSS), and 702-745 (AKPL…RAAQ). Position 757 is an omega-N-methylarginine (R757). Residues 787–800 (DTTRFCPKEERESE) show a composition bias toward basic and acidic residues. Positions 787–844 (DTTRFCPKEERESEQTSFSDQNPRQDQKGGFRSSFRKLFKKKNGNATGEDFCGPWGWW) are disordered. The span at 820 to 829 (SFRKLFKKKN) shows a compositional bias: basic residues.

In terms of biological role, may act as a guanine-nucleotide releasing factor. This Homo sapiens (Human) protein is Rho guanine nucleotide exchange factor 33 (ARHGEF33).